The primary structure comprises 156 residues: 6,7-dimethyl-8-ribityllumazine synthase (156 aa).

Residues Phe-25, 59 to 61 (AFE), and 83 to 85 (AVI) contribute to the 5-amino-6-(D-ribitylamino)uracil site. (2S)-2-hydroxy-3-oxobutyl phosphate is bound at residue 88–89 (GT). His-91 functions as the Proton donor in the catalytic mechanism. Phe-116 contacts 5-amino-6-(D-ribitylamino)uracil. (2S)-2-hydroxy-3-oxobutyl phosphate is bound at residue Arg-130.

It belongs to the DMRL synthase family.

It catalyses the reaction (2S)-2-hydroxy-3-oxobutyl phosphate + 5-amino-6-(D-ribitylamino)uracil = 6,7-dimethyl-8-(1-D-ribityl)lumazine + phosphate + 2 H2O + H(+). Its pathway is cofactor biosynthesis; riboflavin biosynthesis; riboflavin from 2-hydroxy-3-oxobutyl phosphate and 5-amino-6-(D-ribitylamino)uracil: step 1/2. Functionally, catalyzes the formation of 6,7-dimethyl-8-ribityllumazine by condensation of 5-amino-6-(D-ribitylamino)uracil with 3,4-dihydroxy-2-butanone 4-phosphate. This is the penultimate step in the biosynthesis of riboflavin. In Desulfovibrio desulfuricans (strain ATCC 27774 / DSM 6949 / MB), this protein is 6,7-dimethyl-8-ribityllumazine synthase.